Consider the following 480-residue polypeptide: DnaJ homolog subfamily A member 3, mitochondrial (480 aa).

Position 58 is an omega-N-methylarginine; by CARM1 (R58). A J domain is found at 93 to 158; the sequence is DYYQILGVPR…VKRKQYDAYG (66 aa). The residue at position 134 (K134) is an N6-acetyllysine. The CR-type zinc-finger motif lies at 223-301; it reads GVNKEFTVNI…CRGAGQAKQK (79 aa). C236 serves as a coordination point for Zn(2+). CXXCXGXG motif repeat units lie at residues 236 to 243, 253 to 260, 275 to 282, and 289 to 296; these read CERCNGKG, CHYCGGSG, CRRCGGRG, and CVVCRGAG. Omega-N-methylarginine; by CARM1 is present on R238. Zn(2+) contacts are provided by C239, C253, C256, C275, C278, C289, and C292. An Omega-N-methylarginine; by CARM1 modification is found at R293. S398 bears the Phosphoserine mark. Residues 443 to 456 are compositionally biased toward polar residues; that stretch reads LTSSGGSTMDSSAG. Residues 443 to 471 are disordered; the sequence is LTSSGGSTMDSSAGSKARREAGEDEEGFL.

As to quaternary structure, interacts with JAK2, HSPA9B and IFN-gammaR2 chain. Interacts with Ras GTPase-activating protein 1 (RASA1). Isoform 2 interacts with MUSK (via the cytoplasmic domain). In terms of processing, tyrosine phosphorylated. As to expression, widely expressed with highest levels in heart, liver, lung and skeletal muscles. Also expressed in keratinocytes; expression level and distribution is altered in basal cell carcinomas.

It is found in the mitochondrion matrix. The protein localises to the cytoplasm. It localises to the cytosol. Its subcellular location is the postsynaptic cell membrane. Functionally, modulates apoptotic signal transduction or effector structures within the mitochondrial matrix. Affect cytochrome C release from the mitochondria and caspase 3 activation, but not caspase 8 activation. Isoform 1 increases apoptosis triggered by both TNF and the DNA-damaging agent mytomycin C; in sharp contrast, isoform 2 suppresses apoptosis. Can modulate IFN-gamma-mediated transcriptional activity. Isoform 2 may play a role in neuromuscular junction development as an effector of the MUSK signaling pathway. This is DnaJ homolog subfamily A member 3, mitochondrial (DNAJA3) from Homo sapiens (Human).